The following is a 343-amino-acid chain: Dihydroorotase (343 aa).

2 residues coordinate Zn(2+): H14 and H16. Substrate contacts are provided by residues 16–18 (HLR) and N42. Zn(2+)-binding residues include K100, H137, and H175. Position 100 is an N6-carboxylysine (K100). H137 is a binding site for substrate. L220 is a substrate binding site. Zn(2+) is bound at residue D248. Residue D248 is part of the active site. Substrate contacts are provided by H252 and A264.

Belongs to the metallo-dependent hydrolases superfamily. DHOase family. Class II DHOase subfamily. In terms of assembly, homodimer. The cofactor is Zn(2+).

It carries out the reaction (S)-dihydroorotate + H2O = N-carbamoyl-L-aspartate + H(+). The protein operates within pyrimidine metabolism; UMP biosynthesis via de novo pathway; (S)-dihydroorotate from bicarbonate: step 3/3. In terms of biological role, catalyzes the reversible cyclization of carbamoyl aspartate to dihydroorotate. In Parasynechococcus marenigrum (strain WH8102), this protein is Dihydroorotase.